The chain runs to 794 residues: Transcription factor TOG1 (794 aa).

Residues C18, C21, C28, C34, C37, and C44 each contribute to the Zn(2+) site. The zn(2)-C6 fungal-type DNA-binding region spans 18 to 44 (CDRCHRKKIKCNSKKPCFGCIGSQSKC).

It localises to the nucleus. Functionally, transcriptional activator required for growth on non-fermentable carbon sources and that regulates genes involved in fatty acid utilization. Acts as a direct activator that binds the promoters of oleate utilizing genes, encoded key enzymes in beta-oxidation and NADPH regeneration (POX1, FOX2,POT1 and IDP2), the glyoxylate shunt (MLS1 and ICL1), and gluconeogenesis (PCK1 and FBP1). Also regulates the abundance of peroxisomes that are vital for fatty acid oxidation. The polypeptide is Transcription factor TOG1 (Saccharomyces cerevisiae (strain ATCC 204508 / S288c) (Baker's yeast)).